The primary structure comprises 68 residues: Alpha-conotoxin-like Lp1.2 (68 aa).

An N-terminal signal peptide occupies residues methionine 1 to serine 21. The propeptide occupies phenylalanine 22–arginine 48. 2 cysteine pairs are disulfide-bonded: cysteine 50–cysteine 56 and cysteine 51–cysteine 64. The interval serine 52–proline 54 is ser-Xaa-Pro motif, crucial for potent interaction with nAChR. Position 64 is a cysteine amide (cysteine 64). The propeptide occupies glycine 65–arginine 68.

Belongs to the conotoxin A superfamily. Expressed by the venom duct.

The protein localises to the secreted. Its function is as follows. Alpha-conotoxins act on postsynaptic membranes, they bind to the nicotinic acetylcholine receptors (nAChR) and thus inhibit them. The sequence is that of Alpha-conotoxin-like Lp1.2 from Conus leopardus (Leopard cone).